Here is a 309-residue protein sequence, read N- to C-terminus: Protein-L-isoaspartate O-methyltransferase 2 (309 aa).

The short motif at 23-28 is the Nuclear localization signal element; that stretch reads KKRKKK. The active site involves S144.

It belongs to the methyltransferase superfamily. L-isoaspartyl/D-aspartyl protein methyltransferase family. Expressed in rosette leaves, stems, cauline leaves, flowers and developing seeds.

The protein resides in the nucleus. It carries out the reaction [protein]-L-isoaspartate + S-adenosyl-L-methionine = [protein]-L-isoaspartate alpha-methyl ester + S-adenosyl-L-homocysteine. Its function is as follows. Catalyzes the methyl esterification of L-isoaspartyl residues in peptides and proteins that result from spontaneous decomposition of normal L-aspartyl and L-asparaginyl residues. It plays a role in the repair and/or degradation of damaged proteins. The protein is Protein-L-isoaspartate O-methyltransferase 2 (PIMT2) of Arabidopsis thaliana (Mouse-ear cress).